A 744-amino-acid chain; its full sequence is 5-methyltetrahydropteroyltriglutamate--homocysteine methyltransferase (744 aa).

5-methyltetrahydropteroyltri-L-glutamate is bound by residues 17–20 (REVK) and Lys110. Residues 422 to 424 (IGS) and Glu475 contribute to the L-homocysteine site. Residues 422 to 424 (IGS) and Glu475 each bind L-methionine. Trp552 contacts 5-methyltetrahydropteroyltri-L-glutamate. Asp590 lines the L-homocysteine pocket. Position 590 (Asp590) interacts with L-methionine. Residue Glu596 coordinates 5-methyltetrahydropteroyltri-L-glutamate. 3 residues coordinate Zn(2+): His632, Cys634, and Glu656. The active-site Proton donor is His685. Cys717 is a Zn(2+) binding site.

This sequence belongs to the vitamin-B12 independent methionine synthase family. The cofactor is Zn(2+).

It carries out the reaction 5-methyltetrahydropteroyltri-L-glutamate + L-homocysteine = tetrahydropteroyltri-L-glutamate + L-methionine. It participates in amino-acid biosynthesis; L-methionine biosynthesis via de novo pathway; L-methionine from L-homocysteine (MetE route): step 1/1. Catalyzes the transfer of a methyl group from 5-methyltetrahydrofolate to homocysteine resulting in methionine formation. This chain is 5-methyltetrahydropteroyltriglutamate--homocysteine methyltransferase, found in Trichodesmium erythraeum (strain IMS101).